Here is a 325-residue protein sequence, read N- to C-terminus: Small ribosomal subunit protein uS4m (325 aa).

Residues 146 to 209 (KRIDMILLRS…HKQNLIHRLK (64 aa)) enclose the S4 RNA-binding domain.

Belongs to the universal ribosomal protein uS4 family.

Its subcellular location is the mitochondrion. The chain is Small ribosomal subunit protein uS4m (mrps4) from Dictyostelium citrinum (Slime mold).